The primary structure comprises 56 residues: Large ribosomal subunit protein bL33A (56 aa).

Belongs to the bacterial ribosomal protein bL33 family.

The polypeptide is Large ribosomal subunit protein bL33A (Sorangium cellulosum (strain So ce56) (Polyangium cellulosum (strain So ce56))).